A 231-amino-acid polypeptide reads, in one-letter code: A-type ATP synthase subunit D (231 aa).

The protein belongs to the V-ATPase D subunit family. As to quaternary structure, has multiple subunits with at least A(3), B(3), C, D, E, F, H, I and proteolipid K(x).

Its subcellular location is the cell membrane. Its function is as follows. Component of the A-type ATP synthase that produces ATP from ADP in the presence of a proton gradient across the membrane. This is A-type ATP synthase subunit D from Methanobrevibacter smithii (strain ATCC 35061 / DSM 861 / OCM 144 / PS).